The following is a 435-amino-acid chain: GTPase Der (435 aa).

EngA-type G domains follow at residues P4 to D167 and I175 to T350. Residues G10–S17, D57–I61, N119–D122, G181–S188, D228–I232, and N293–D296 contribute to the GTP site. The 85-residue stretch at R351–K435 folds into the KH-like domain.

Belongs to the TRAFAC class TrmE-Era-EngA-EngB-Septin-like GTPase superfamily. EngA (Der) GTPase family. Associates with the 50S ribosomal subunit.

GTPase that plays an essential role in the late steps of ribosome biogenesis. In Lacticaseibacillus paracasei (strain ATCC 334 / BCRC 17002 / CCUG 31169 / CIP 107868 / KCTC 3260 / NRRL B-441) (Lactobacillus paracasei), this protein is GTPase Der.